The following is a 478-amino-acid chain: ATP synthase subunit beta (478 aa).

ATP is bound at residue 164–171 (GGAGVGKT).

This sequence belongs to the ATPase alpha/beta chains family. F-type ATPases have 2 components, CF(1) - the catalytic core - and CF(0) - the membrane proton channel. CF(1) has five subunits: alpha(3), beta(3), gamma(1), delta(1), epsilon(1). CF(0) has three main subunits: a(1), b(2) and c(9-12). The alpha and beta chains form an alternating ring which encloses part of the gamma chain. CF(1) is attached to CF(0) by a central stalk formed by the gamma and epsilon chains, while a peripheral stalk is formed by the delta and b chains.

It is found in the cell membrane. It catalyses the reaction ATP + H2O + 4 H(+)(in) = ADP + phosphate + 5 H(+)(out). Produces ATP from ADP in the presence of a proton gradient across the membrane. The catalytic sites are hosted primarily by the beta subunits. This Streptomyces coelicolor (strain ATCC BAA-471 / A3(2) / M145) protein is ATP synthase subunit beta.